Here is a 115-residue protein sequence, read N- to C-terminus: MSLKIRLARAGAKKRPYYHIVVADSRSPRDGRFIEKVGSYNPMLPADHADRIRLVDERIKHWLSNGALATDRVARFLGNAGLAPKPTYNEQPKKSAPKAKAQERAKAAADAAAAA.

A disordered region spans residues 81 to 115 (GLAPKPTYNEQPKKSAPKAKAQERAKAAADAAAAA).

The protein belongs to the bacterial ribosomal protein bS16 family.

This chain is Small ribosomal subunit protein bS16, found in Gluconobacter oxydans (strain 621H) (Gluconobacter suboxydans).